The chain runs to 554 residues: Arginine--tRNA ligase (554 aa).

The short motif at 130 to 140 (ANPTGDLHIGH) is the 'HIGH' region element.

This sequence belongs to the class-I aminoacyl-tRNA synthetase family. In terms of assembly, monomer.

It is found in the cytoplasm. The enzyme catalyses tRNA(Arg) + L-arginine + ATP = L-arginyl-tRNA(Arg) + AMP + diphosphate. This Staphylococcus carnosus (strain TM300) protein is Arginine--tRNA ligase.